A 383-amino-acid polypeptide reads, in one-letter code: Lipid-A-disaccharide synthase (383 aa).

This sequence belongs to the LpxB family.

The catalysed reaction is a lipid X + a UDP-2-N,3-O-bis[(3R)-3-hydroxyacyl]-alpha-D-glucosamine = a lipid A disaccharide + UDP + H(+). Its pathway is bacterial outer membrane biogenesis; LPS lipid A biosynthesis. Functionally, condensation of UDP-2,3-diacylglucosamine and 2,3-diacylglucosamine-1-phosphate to form lipid A disaccharide, a precursor of lipid A, a phosphorylated glycolipid that anchors the lipopolysaccharide to the outer membrane of the cell. This Aliivibrio fischeri (strain MJ11) (Vibrio fischeri) protein is Lipid-A-disaccharide synthase.